The primary structure comprises 324 residues: 4-hydroxyphenylpyruvate 3-dimethylallyltransferase (324 aa).

Residues Arg160 and Glu281 each coordinate substrate.

The protein belongs to the aromatic prenyltransferase family. As to quaternary structure, monomer.

The enzyme catalyses 3-(4-hydroxyphenyl)pyruvate + dimethylallyl diphosphate = 3-dimethylallyl-4-hydroxyphenylpyruvate + diphosphate. It participates in antibiotic biosynthesis. Its function is as follows. Magnesium-independent aromatic prenyltransferase that catalyzes the irreversible transfer of a dimethylallyl group to 4-hydroxyphenylpyruvate to produce the ring A structure in the clorobiocin biosynthesis pathway. Clorobiocin is an aminocoumarin family antibiotic. The chain is 4-hydroxyphenylpyruvate 3-dimethylallyltransferase from Streptomyces roseochromogenus subsp. oscitans.